The chain runs to 362 residues: Oxysterol-binding protein 5 (362 aa).

It belongs to the OSBP family.

This Dictyostelium discoideum (Social amoeba) protein is Oxysterol-binding protein 5 (osbE).